We begin with the raw amino-acid sequence, 507 residues long: ATP synthase subunit alpha, chloroplastic (507 aa).

170 to 177 contacts ATP; the sequence is GDRQTGKT. Residue threonine 257 is modified to Phosphothreonine.

This sequence belongs to the ATPase alpha/beta chains family. In terms of assembly, F-type ATPases have 2 components, CF(1) - the catalytic core - and CF(0) - the membrane proton channel. CF(1) has five subunits: alpha(3), beta(3), gamma(1), delta(1), epsilon(1). CF(0) has four main subunits: a, b, b' and c.

It is found in the plastid. It localises to the chloroplast thylakoid membrane. The enzyme catalyses ATP + H2O + 4 H(+)(in) = ADP + phosphate + 5 H(+)(out). Its function is as follows. Produces ATP from ADP in the presence of a proton gradient across the membrane. The alpha chain is a regulatory subunit. The protein is ATP synthase subunit alpha, chloroplastic of Arabis hirsuta (Hairy rock-cress).